Here is a 384-residue protein sequence, read N- to C-terminus: Probable inactive patatin-like protein 9 (384 aa).

The PNPLA domain maps to 33 to 234 (LSIDGGGTTG…VMNNPTAAAV (202 aa)). A GXGXXG motif is present at residues 37–42 (GGGTTG). The Proton acceptor role is filled by D221. The DGA/G signature appears at 221–223 (DGG). The tract at residues 363 to 384 (GKSSLPPSPCKESAVNPLADGR) is disordered.

It belongs to the patatin family. Highly expressed in roots and at lower levels in flowers and siliques.

This is Probable inactive patatin-like protein 9 (PLP9) from Arabidopsis thaliana (Mouse-ear cress).